A 280-amino-acid polypeptide reads, in one-letter code: Transcription factor HES-1 (280 aa).

A disordered region spans residues 1–44; it reads MPADIMEKNSSSPVAATPASVNTTPDKPKTASEHRKSSKPIMEK. A compositionally biased stretch (low complexity) spans 10–21; it reads SSSPVAATPASV. The segment covering 26 to 35 has biased composition (basic and acidic residues); it reads DKPKTASEHR. In terms of domain architecture, bHLH spans 34–91; the sequence is HRKSSKPIMEKRRRARINESLSQLKTLILDALKKDSSRHSKLEKADILEMTVKHLRNL. The Orange domain occupies 110–143; the sequence is YRAGFSECMNEVTRFLSTCEGVNTEVRTRLLGHL. Disordered regions lie at residues 157-200 and 254-280; these read GQPH…PPGG and TSVGPNAVSPSSGPSLTADSMWRPWRN. Composition is skewed to pro residues over residues 164–174 and 181–200; these read QAPPPPPPGPG and FAPPPPLVPIPGGAAPPPGG. Residues 254–271 show a composition bias toward polar residues; the sequence is TSVGPNAVSPSSGPSLTA. Positions 275–278 match the WRPW motif motif; it reads WRPW.

In terms of assembly, transcription repression requires formation of a complex with a corepressor protein of the Groucho/TLE family. Interacts with SIRT1. Interacts (via WPRW motif) with TLE1, and more weakly with TLE2. Interacts with HES6. Interacts with an FA complex, composed of FANCA, FANCF, FANCG and FANCL, but not of FANCC, nor FANCE.

Its subcellular location is the nucleus. Transcriptional repressor of genes that require a bHLH protein for their transcription. May act as a negative regulator of myogenesis by inhibiting the functions of MYOD1 and ASH1. Binds DNA on N-box motifs: 5'-CACNAG-3' with high affinity and on E-box motifs: 5'-CANNTG-3' with low affinity. May play a role in a functional FA core complex response to DNA cross-link damage, being required for the stability and nuclear localization of FA core complex proteins, as well as for FANCD2 monoubiquitination in response to DNA damage. The protein is Transcription factor HES-1 (HES1) of Bos taurus (Bovine).